The chain runs to 427 residues: Histidinol dehydrogenase (427 aa).

S232, Q254, and H257 together coordinate substrate. Zn(2+) contacts are provided by Q254 and H257. Active-site proton acceptor residues include E322 and H323. The substrate site is built by H323, D356, E410, and H415. D356 contributes to the Zn(2+) binding site. H415 serves as a coordination point for Zn(2+).

Belongs to the histidinol dehydrogenase family. Zn(2+) is required as a cofactor.

It carries out the reaction L-histidinol + 2 NAD(+) + H2O = L-histidine + 2 NADH + 3 H(+). It participates in amino-acid biosynthesis; L-histidine biosynthesis; L-histidine from 5-phospho-alpha-D-ribose 1-diphosphate: step 9/9. In terms of biological role, catalyzes the sequential NAD-dependent oxidations of L-histidinol to L-histidinaldehyde and then to L-histidine. The polypeptide is Histidinol dehydrogenase (Listeria innocua serovar 6a (strain ATCC BAA-680 / CLIP 11262)).